The primary structure comprises 121 residues: Small ribosomal subunit protein uS13 (121 aa).

The tract at residues 88–121 is disordered; the sequence is GMRHRRGLPTRGQNTKNNARTRKGPAKSIAGKKK. A compositionally biased stretch (basic residues) spans 106–121; the sequence is ARTRKGPAKSIAGKKK.

Belongs to the universal ribosomal protein uS13 family. As to quaternary structure, part of the 30S ribosomal subunit. Forms a loose heterodimer with protein S19. Forms two bridges to the 50S subunit in the 70S ribosome.

Functionally, located at the top of the head of the 30S subunit, it contacts several helices of the 16S rRNA. In the 70S ribosome it contacts the 23S rRNA (bridge B1a) and protein L5 of the 50S subunit (bridge B1b), connecting the 2 subunits; these bridges are implicated in subunit movement. Contacts the tRNAs in the A and P-sites. The protein is Small ribosomal subunit protein uS13 of Lactococcus lactis subsp. cremoris (strain MG1363).